Reading from the N-terminus, the 202-residue chain is Small ribosomal subunit protein uS5 (202 aa).

An S5 DRBM domain is found at 50 to 113; that stretch reads LKQELLNLNL…REAKLNITPV (64 aa).

It belongs to the universal ribosomal protein uS5 family. As to quaternary structure, part of the 30S ribosomal subunit. Contacts protein S4.

Its function is as follows. With S4 and S12 plays an important role in translational accuracy. In Pyrobaculum calidifontis (strain DSM 21063 / JCM 11548 / VA1), this protein is Small ribosomal subunit protein uS5.